The following is a 111-amino-acid chain: Cytochrome c (111 aa).

Serine 1 bears the N-acetylserine mark. Residues cysteine 22, cysteine 25, and histidine 26 each coordinate heme c. Lysine 80 carries the post-translational modification N6,N6,N6-trimethyllysine. Methionine 88 contacts heme c.

Belongs to the cytochrome c family. Binds 1 heme c group covalently per subunit.

The protein resides in the mitochondrion intermembrane space. Its function is as follows. Electron carrier protein. The oxidized form of the cytochrome c heme group can accept an electron from the heme group of the cytochrome c1 subunit of cytochrome reductase. Cytochrome c then transfers this electron to the cytochrome oxidase complex, the final protein carrier in the mitochondrial electron-transport chain. The chain is Cytochrome c from Ulva intestinalis (Hollow green nori).